We begin with the raw amino-acid sequence, 263 residues long: Tryptophan synthase alpha chain (263 aa).

Residues Glu-46 and Asp-57 each act as proton acceptor in the active site.

It belongs to the TrpA family. As to quaternary structure, tetramer of two alpha and two beta chains.

The enzyme catalyses (1S,2R)-1-C-(indol-3-yl)glycerol 3-phosphate + L-serine = D-glyceraldehyde 3-phosphate + L-tryptophan + H2O. It functions in the pathway amino-acid biosynthesis; L-tryptophan biosynthesis; L-tryptophan from chorismate: step 5/5. In terms of biological role, the alpha subunit is responsible for the aldol cleavage of indoleglycerol phosphate to indole and glyceraldehyde 3-phosphate. The protein is Tryptophan synthase alpha chain of Bacteroides fragilis (strain ATCC 25285 / DSM 2151 / CCUG 4856 / JCM 11019 / LMG 10263 / NCTC 9343 / Onslow / VPI 2553 / EN-2).